An 89-amino-acid polypeptide reads, in one-letter code: Co-chaperonin GroES (89 aa).

It belongs to the GroES chaperonin family. Heptamer of 7 subunits arranged in a ring. Interacts with the chaperonin GroEL.

It is found in the cytoplasm. Its function is as follows. Together with the chaperonin GroEL, plays an essential role in assisting protein folding. The GroEL-GroES system forms a nano-cage that allows encapsulation of the non-native substrate proteins and provides a physical environment optimized to promote and accelerate protein folding. GroES binds to the apical surface of the GroEL ring, thereby capping the opening of the GroEL channel. In Petrotoga mobilis (strain DSM 10674 / SJ95), this protein is Co-chaperonin GroES.